A 286-amino-acid polypeptide reads, in one-letter code: Protease HtpX homolog (286 aa).

Helical transmembrane passes span 6–26 and 28–48; these read TCFL…YVGG and QGMI…YFFS. H130 serves as a coordination point for Zn(2+). Residue E131 is part of the active site. A Zn(2+)-binding site is contributed by H134. The next 2 helical transmembrane spans lie at 140-160 and 178-198; these read ILTG…ANFA and AIML…QMAI. E203 is a binding site for Zn(2+).

Belongs to the peptidase M48B family. It depends on Zn(2+) as a cofactor.

The protein resides in the cell inner membrane. The protein is Protease HtpX homolog of Campylobacter curvus (strain 525.92).